Consider the following 264-residue polypeptide: Acyl-[acyl-carrier-protein]--UDP-N-acetylglucosamine O-acyltransferase (264 aa).

It belongs to the transferase hexapeptide repeat family. LpxA subfamily. Homotrimer.

Its subcellular location is the cytoplasm. It carries out the reaction a (3R)-hydroxyacyl-[ACP] + UDP-N-acetyl-alpha-D-glucosamine = a UDP-3-O-[(3R)-3-hydroxyacyl]-N-acetyl-alpha-D-glucosamine + holo-[ACP]. The protein operates within glycolipid biosynthesis; lipid IV(A) biosynthesis; lipid IV(A) from (3R)-3-hydroxytetradecanoyl-[acyl-carrier-protein] and UDP-N-acetyl-alpha-D-glucosamine: step 1/6. Its function is as follows. Involved in the biosynthesis of lipid A, a phosphorylated glycolipid that anchors the lipopolysaccharide to the outer membrane of the cell. In Albidiferax ferrireducens (strain ATCC BAA-621 / DSM 15236 / T118) (Rhodoferax ferrireducens), this protein is Acyl-[acyl-carrier-protein]--UDP-N-acetylglucosamine O-acyltransferase.